Here is a 530-residue protein sequence, read N- to C-terminus: Probable cytochrome P450 519A1 (530 aa).

Residues 1–21 (MESIINLIFYIIIFLILIDFL) form a helical membrane-spanning segment. Residue Cys476 coordinates heme.

This sequence belongs to the cytochrome P450 family. Heme is required as a cofactor.

It localises to the membrane. This is Probable cytochrome P450 519A1 (cyp519A1) from Dictyostelium discoideum (Social amoeba).